The sequence spans 272 residues: Replication-associated protein A (272 aa).

The CRESS-DNA virus Rep endonuclease domain occupies 11–114 (SHRNANTFLT…PLAVFERGTF (104 aa)). The RCR-1 signature appears at 18-21 (FLTY). A divalent metal cation contacts are provided by Glu52, His60, and His62. Positions 60–62 (HLH) match the RCR-2 motif. Residue Tyr100 is the For DNA cleavage activity of the active site. Residues 100–103 (YILK) carry the RCR-3 motif. Residue Glu104 participates in a divalent metal cation binding. The interval 175 to 187 (SANKLFPEIQEEF) is oligomerization. Residues 198–202 (LLCNE) form a binding to RBR1 region. A transactivation region spans residues 221–230 (MLLQPTCYTL). The disordered stretch occupies residues 245–272 (SHQMKDQESRASTSSAQQEPENLLGPEA). Positions 254 to 264 (RASTSSAQQEP) are enriched in polar residues.

The protein belongs to the geminiviridae Rep protein family. Homooligomer. Interacts with host retinoblastoma-related protein 1 (RBR1), and may thereby deregulate the host cell cycle. Part of the C- and V-complexes which are RepA-Rep-DNA complexes involved in the c-sense and v-sense transcription. Mg(2+) serves as cofactor. Requires Mn(2+) as cofactor.

The protein localises to the host nucleus. It localises to the host cytoplasm. Functionally, implicated in enhancement of V-sense gene expression. Acts a an inhibitor of C-sense gene transcription. The sequence is that of Replication-associated protein A from Maize streak virus genotype A (isolate Nigeria) (MSV).